Consider the following 569-residue polypeptide: Protein NDNF (569 aa).

The first 19 residues, 1-19 (MKLCRWYIALFLLPVCLQS), serve as a signal peptide directing secretion. 2 consecutive Fibronectin type-III domains span residues 261–332 (NSAG…VGTF) and 446–565 (PSLP…IVKT). Asparagine 323 carries N-linked (GlcNAc...) asparagine glycosylation.

It localises to the secreted. In terms of biological role, secretory protein that plays a role in various cellular processes. Acts as a chemorepellent acting on gonadotropin-releasing hormone (GnRH) expressing neurons regulating their migration to the hypothalamus. Also promotes neuron migration, growth and survival as well as neurite outgrowth and is involved in the development of the olfactory system. May also act through the regulation of growth factors activity and downstream signaling. Also regulates extracellular matrix assembly and cell adhesiveness. Promotes endothelial cell survival, vessel formation and plays an important role in the process of revascularization through NOS3-dependent mechanisms. The chain is Protein NDNF (ndnf) from Xenopus laevis (African clawed frog).